We begin with the raw amino-acid sequence, 219 residues long: MTVQLGAFYLFPLFMAGFVQTNSNLEKMDCYKDVTGTIYDYDAFTLNGNEHIQFKQYAGKHVLFVNVATYCGLTAQYPELNTLQEELKPFGLVVLGFPCNQFGKQEPGENSEILLGLKYVRPGGGYVPNFQLFEKGDVNGEKEQKVFTFLKHSCPHPSELIGSIGYISWEPIRVHDIRWNFEKFLVGPDGVPVMRWVHETPISTVKSDILAYLKQFKTE.

The N-terminal stretch at 1–21 is a signal peptide; the sequence is MTVQLGAFYLFPLFMAGFVQT. The active site involves Cys-71.

Belongs to the glutathione peroxidase family. In terms of assembly, homotetramer. Proximal caput epididymis.

It is found in the secreted. The enzyme catalyses 2 glutathione + H2O2 = glutathione disulfide + 2 H2O. Its function is as follows. May constitute a glutathione peroxidase-like protective system against peroxide damage in sperm membrane lipids. Since the purified porcine enzyme has very little activity towards hydrogen peroxide or organic hydroperoxides the protective effect is not likely to be exerted by its enzymatic activity. Instead, may protect sperm from premature acrosome reaction in the epididymis by binding to lipid peroxides, which might otherwise interact with phospholipase A2 and induce the acrosome reaction. This chain is Epididymal secretory glutathione peroxidase (GPX5), found in Sus scrofa (Pig).